A 434-amino-acid chain; its full sequence is Gamma-glutamyl phosphate reductase (434 aa).

This sequence belongs to the gamma-glutamyl phosphate reductase family.

It localises to the cytoplasm. The catalysed reaction is L-glutamate 5-semialdehyde + phosphate + NADP(+) = L-glutamyl 5-phosphate + NADPH + H(+). It participates in amino-acid biosynthesis; L-proline biosynthesis; L-glutamate 5-semialdehyde from L-glutamate: step 2/2. In terms of biological role, catalyzes the NADPH-dependent reduction of L-glutamate 5-phosphate into L-glutamate 5-semialdehyde and phosphate. The product spontaneously undergoes cyclization to form 1-pyrroline-5-carboxylate. This Trichormus variabilis (strain ATCC 29413 / PCC 7937) (Anabaena variabilis) protein is Gamma-glutamyl phosphate reductase.